The primary structure comprises 46 residues: Phospholipase A2 superbin c (46 aa).

Positions 28, 30, and 32 each coordinate Ca(2+). The cysteines at positions 29 and 45 are disulfide-linked.

It depends on Ca(2+) as a cofactor. As to expression, expressed by the venom gland.

It is found in the secreted. It carries out the reaction a 1,2-diacyl-sn-glycero-3-phosphocholine + H2O = a 1-acyl-sn-glycero-3-phosphocholine + a fatty acid + H(+). Functionally, snake venom phospholipase A2 (PLA2) that inhibits collagen-induced platelet aggregation. In terms of inhibition of platelet aggregation, superbin c is more potent as superbin d. PLA2 catalyzes the calcium-dependent hydrolysis of the 2-acyl groups in 3-sn-phosphoglycerides. This Austrelaps superbus (Lowland copperhead snake) protein is Phospholipase A2 superbin c.